Reading from the N-terminus, the 586-residue chain is Nucleus accumbens-associated protein 2 (586 aa).

Positions Cys30–Ala94 constitute a BTB domain. Lys171 participates in a covalent cross-link: Glycyl lysine isopeptide (Lys-Gly) (interchain with G-Cter in SUMO2). Residues Met177–Arg196 form a disordered region. A Glycyl lysine isopeptide (Lys-Gly) (interchain with G-Cter in SUMO2) cross-link involves residue Lys215. Residues Gln236 to Ala272 are disordered. A compositionally biased stretch (polar residues) spans Pro247–Tyr261. Residues Lys297, Lys427, and Lys454 each participate in a glycyl lysine isopeptide (Lys-Gly) (interchain with G-Cter in SUMO2) cross-link. Positions Gly349–Arg446 constitute a BEN domain. A disordered region spans residues Ala542–Leu586. The span at Gly550 to Ala572 shows a compositional bias: polar residues.

Homooligomer; mediated by the BTB domain. Interacts with the NuRD complex. Interacts (via C-terminal part) with HDAC2. Interacts (via BTB domain) with MTA1, MTA2 and MTA3.

The protein localises to the nucleus. Functionally, functions as a transcriptional repressor through its association with the NuRD complex. Recruits the NuRD complex to the promoter of MDM2, leading to the repression of MDM2 transcription and subsequent stability of p53/TP53. This is Nucleus accumbens-associated protein 2 (Nacc2) from Mus musculus (Mouse).